A 144-amino-acid polypeptide reads, in one-letter code: Peptide methionine sulfoxide reductase MsrB (144 aa).

The 124-residue stretch at 5 to 128 folds into the MsrB domain; sequence KEELRQRIGE…NSAALQFIPV (124 aa). C117 acts as the Nucleophile in catalysis.

Belongs to the MsrB Met sulfoxide reductase family.

It carries out the reaction L-methionyl-[protein] + [thioredoxin]-disulfide + H2O = L-methionyl-(R)-S-oxide-[protein] + [thioredoxin]-dithiol. The sequence is that of Peptide methionine sulfoxide reductase MsrB from Ligilactobacillus salivarius (strain UCC118) (Lactobacillus salivarius).